The following is a 531-amino-acid chain: Apolipoprotein N-acyltransferase (531 aa).

Helical transmembrane passes span 8–28 (IILL…LLAM), 34–54 (FGIF…IDGV), 74–94 (WSFG…AFLV), 105–125 (LAVV…VLVA), 128–148 (LWSD…VAEW), 178–198 (VLNV…PALI), and 206–226 (VGLA…YYRL). The CN hydrolase domain maps to 243–493 (VQPVIDQAKK…KGVTDAILPG (251 aa)). E287 acts as the Proton acceptor in catalysis. K351 is an active-site residue. C405 (nucleophile) is an active-site residue. Residues 501 to 521 (SMLRGRIFWFTGVFLLLVAAI) traverse the membrane as a helical segment.

Belongs to the CN hydrolase family. Apolipoprotein N-acyltransferase subfamily.

It is found in the cell inner membrane. It carries out the reaction N-terminal S-1,2-diacyl-sn-glyceryl-L-cysteinyl-[lipoprotein] + a glycerophospholipid = N-acyl-S-1,2-diacyl-sn-glyceryl-L-cysteinyl-[lipoprotein] + a 2-acyl-sn-glycero-3-phospholipid + H(+). The protein operates within protein modification; lipoprotein biosynthesis (N-acyl transfer). Functionally, catalyzes the phospholipid dependent N-acylation of the N-terminal cysteine of apolipoprotein, the last step in lipoprotein maturation. In Sinorhizobium fredii (strain NBRC 101917 / NGR234), this protein is Apolipoprotein N-acyltransferase.